Here is a 461-residue protein sequence, read N- to C-terminus: MSRQVVRSSKFRHVFGQPAKADQCYEDVRVSQTTWDSGFCAVNPKFMALICEASGGGAFLVLPLGKTGRVDKNVPLVCGHTAPVLDIAWCPHNDNVIASGSEDCTVMVWEIPDGGLVLPLREPVITLEGHTKRVGIVAWHPTAQNVLLSAGCDNVILVWDVGTGAAVLTLGPDVHPDTIYSVDWSRDGALICTSCRDKRVRVIEPRKGTVVAEKDRPHEGTRPVHAVFVSEGKILTTGFSRMSERQVALWDTKHLEEPLSLQELDTSSGVLLPFFDPDTNIVYLCGKGDSSIRYFEITSEAPFLHYLSMFSSKESQRGMGYMPKRGLEVNKCEIARFYKLHERKCEPIAMTVPRKSDLFQEDLYPPTAGPDPALTAEEWLGGRDAGPLLISLKDGYVPPKSRELRVNRGLDSARRRATPEPSGTPSSDTVSRLEEDVRNLNAIVQKLQERLDRLEETVQAK.

S2 is modified (N-acetylserine). Phosphoserine; by PKC is present on S2. WD repeat units follow at residues 13–63, 73–110, 123–160, 164–204, 207–251, 258–296, and 302–349; these read HVFG…LVLP, NVPL…MVWE, PVIT…LVWD, GAAV…RVIE, KGTV…ALWD, PLSL…RYFE, and PFLH…EPIA. Over residues 403–418 the composition is skewed to basic and acidic residues; the sequence is ELRVNRGLDSARRRAT. The interval 403–434 is disordered; it reads ELRVNRGLDSARRRATPEPSGTPSSDTVSRLE. S412 carries the phosphoserine; by PKC modification. Residue T418 is modified to Phosphothreonine. The span at 421–430 shows a compositional bias: polar residues; the sequence is PSGTPSSDTV. Position 422 is a phosphoserine (S422). Residues 424–461 adopt a coiled-coil conformation; the sequence is TPSSDTVSRLEEDVRNLNAIVQKLQERLDRLEETVQAK.

It belongs to the WD repeat coronin family. As to quaternary structure, binds actin. Post-translationally, phosphorylation at Ser-412 by PKC strongly down-regulates the association with actin. In terms of processing, polyubiquitinated by RNF128 with 'Lys-48'-linked chains, leading to proteasomal degradation. As to expression, expressed in spleen, lymph nodes, thymus, brain and at very lower levels in lung. Also expressed in cells of the lymphoid/myeloid lineage. Not expressed in Kuffper cells.

Its subcellular location is the cytoplasm. The protein resides in the cytoskeleton. It is found in the cell cortex. It localises to the cytoplasmic vesicle. The protein localises to the phagosome membrane. In terms of biological role, may be a crucial component of the cytoskeleton of highly motile cells, functioning both in the invagination of large pieces of plasma membrane, as well as in forming protrusions of the plasma membrane involved in cell locomotion. In mycobacteria-infected cells, its retention on the phagosomal membrane prevents fusion between phagosomes and lysosomes. The sequence is that of Coronin-1A (Coro1a) from Mus musculus (Mouse).